The chain runs to 75 residues: ATP synthase subunit c (75 aa).

2 helical membrane-spanning segments follow: residues 9 to 29 (IGAG…GNIW) and 52 to 72 (IGFA…LILL).

It belongs to the ATPase C chain family. F-type ATPases have 2 components, F(1) - the catalytic core - and F(0) - the membrane proton channel. F(1) has five subunits: alpha(3), beta(3), gamma(1), delta(1), epsilon(1). F(0) has four main subunits: a(1), b(1), b'(1) and c(10-14). The alpha and beta chains form an alternating ring which encloses part of the gamma chain. F(1) is attached to F(0) by a central stalk formed by the gamma and epsilon chains, while a peripheral stalk is formed by the delta, b and b' chains.

Its subcellular location is the cell inner membrane. Its function is as follows. F(1)F(0) ATP synthase produces ATP from ADP in the presence of a proton or sodium gradient. F-type ATPases consist of two structural domains, F(1) containing the extramembraneous catalytic core and F(0) containing the membrane proton channel, linked together by a central stalk and a peripheral stalk. During catalysis, ATP synthesis in the catalytic domain of F(1) is coupled via a rotary mechanism of the central stalk subunits to proton translocation. Functionally, key component of the F(0) channel; it plays a direct role in translocation across the membrane. A homomeric c-ring of between 10-14 subunits forms the central stalk rotor element with the F(1) delta and epsilon subunits. The polypeptide is ATP synthase subunit c (Rhodospirillum rubrum (strain ATCC 11170 / ATH 1.1.1 / DSM 467 / LMG 4362 / NCIMB 8255 / S1)).